We begin with the raw amino-acid sequence, 37 residues long: U10-ctenitoxin-Co1a (37 aa).

Intrachain disulfides connect cysteine 2/cysteine 17, cysteine 9/cysteine 22, cysteine 16/cysteine 33, and cysteine 24/cysteine 31.

Expressed by the venom gland.

It localises to the secreted. Its function is as follows. Antagonist of L-type calcium channels (Cav1/CACNA1). This Ctenus ornatus (Brazilian spider) protein is U10-ctenitoxin-Co1a.